We begin with the raw amino-acid sequence, 532 residues long: E3 ubiquitin-protein ligase rnf8-B (532 aa).

One can recognise an FHA domain in the interval 30-84 (VTMGRGLGVTYQLKPTLCPLMISRTHCLFKQNARDEWTVTDNKSLNGVWRNKERL). The interval 127-209 (SLIRPLPGKT…VETDTVSPTQ (83 aa)) is disordered. Over residues 169–178 (VSRDGEDSAK) the composition is skewed to basic and acidic residues. The RING-type zinc finger occupies 377–415 (CIICSEHFIEAVTLNCAHSFCSYCIKSWRKRKEECPICR).

This sequence belongs to the RNF8 family. As to quaternary structure, homodimer. Forms a E2-E3 ubiquitin ligase complex composed of the rnf8 homodimer and a E2 heterodimer of ube2n and ube2v2.

The protein localises to the nucleus. The catalysed reaction is S-ubiquitinyl-[E2 ubiquitin-conjugating enzyme]-L-cysteine + [acceptor protein]-L-lysine = [E2 ubiquitin-conjugating enzyme]-L-cysteine + N(6)-ubiquitinyl-[acceptor protein]-L-lysine.. The protein operates within protein modification; protein ubiquitination. Functionally, E3 ubiquitin-protein ligase that plays a key role in DNA damage signaling via 2 distinct roles: by mediating the 'Lys-63'-linked ubiquitination of histones H2A and H2AX and promoting the recruitment of DNA repair proteins at double-strand breaks (DSBs) sites, and by catalyzing 'Lys-48'-linked ubiquitination to remove target proteins from DNA damage sites. Following DNA DSBs, it is recruited to the sites of damage by ATM-phosphorylated mdc1 and catalyzes the 'Lys-63'-linked ubiquitination of histones H2A and H2AX, thereby promoting the formation of tp53bp1 and brca1 ionizing radiation-induced foci (IRIF). H2A ubiquitination also mediates the ATM-dependent transcriptional silencing at regions flanking DSBs in cis, a mechanism to avoid collision between transcription and repair intermediates. Also catalyzes the formation of 'Lys-48'-linked polyubiquitin chains, leading to degradation of substrate proteins. In addition to its function in damage signaling, also plays a role in higher-order chromatin structure by mediating extensive chromatin decondensation. In Xenopus laevis (African clawed frog), this protein is E3 ubiquitin-protein ligase rnf8-B.